The following is a 511-amino-acid chain: Ectonucleoside triphosphate diphosphohydrolase 1 (511 aa).

The Cytoplasmic portion of the chain corresponds to 1–16 (MEDIKDSKVKRFCSKN). The helical transmembrane segment at 17 to 37 (ILIILGFSSVLAVIALIAVGL) threads the bilayer. Residues 38–478 (THNKPLPENV…LSPPLPHSTY (441 aa)) lie on the Extracellular side of the membrane. The interval 46–171 (NVKYGIVLDA…DFQGAKIITG (126 aa)) is N-terminal lobe. N-linked (GlcNAc...) asparagine glycosylation is present at Asn73. A disulfide bridge connects residues Cys84 and Cys108. Glu174 functions as the Proton acceptor in the catalytic mechanism. The C-terminal lobe stretch occupies residues 205–441 (QATFGALDLG…GTSWDQIHFM (237 aa)). N-linked (GlcNAc...) asparagine glycosylation is found at Asn226, Asn291, and Asn333. 2 disulfide bridges follow: Cys254/Cys300 and Cys281/Cys324. A disulfide bridge links Cys337 with Cys342. Asn374 carries N-linked (GlcNAc...) asparagine glycosylation. The cysteines at positions 391 and 414 are disulfide-linked. 2 N-linked (GlcNAc...) asparagine glycosylation sites follow: Asn429 and Asn458. The helical transmembrane segment at 479-499 (ISLMVLFSLVLVAMVITGLFI) threads the bilayer. The Cytoplasmic segment spans residues 500 to 511 (FSKPSYFWKEAV).

This sequence belongs to the GDA1/CD39 NTPase family. As to quaternary structure, homodimer; disulfide-linked. It depends on Ca(2+) as a cofactor. Mg(2+) is required as a cofactor. N-glycosylated. In terms of processing, the N-terminus is blocked. Post-translationally, palmitoylated on Cys-13; which is required for caveola targeting. Expressed in primary neurons and astrocytes, kidney, liver, muscle, thymus, lung and spleen.

The protein resides in the membrane. The protein localises to the caveola. It carries out the reaction a ribonucleoside 5'-triphosphate + 2 H2O = a ribonucleoside 5'-phosphate + 2 phosphate + 2 H(+). The catalysed reaction is a ribonucleoside 5'-triphosphate + H2O = a ribonucleoside 5'-diphosphate + phosphate + H(+). The enzyme catalyses a ribonucleoside 5'-diphosphate + H2O = a ribonucleoside 5'-phosphate + phosphate + H(+). It catalyses the reaction ATP + 2 H2O = AMP + 2 phosphate + 2 H(+). It carries out the reaction ATP + H2O = ADP + phosphate + H(+). The catalysed reaction is ADP + H2O = AMP + phosphate + H(+). The enzyme catalyses CTP + 2 H2O = CMP + 2 phosphate + 2 H(+). It catalyses the reaction CTP + H2O = CDP + phosphate + H(+). It carries out the reaction CDP + H2O = CMP + phosphate + H(+). The catalysed reaction is GTP + 2 H2O = GMP + 2 phosphate + 2 H(+). The enzyme catalyses GTP + H2O = GDP + phosphate + H(+). It catalyses the reaction GDP + H2O = GMP + phosphate + H(+). It carries out the reaction ITP + 2 H2O = IMP + 2 phosphate + 2 H(+). The catalysed reaction is ITP + H2O = IDP + phosphate + H(+). The enzyme catalyses IDP + H2O = IMP + phosphate + H(+). It catalyses the reaction UTP + 2 H2O = UMP + 2 phosphate + 2 H(+). It carries out the reaction UTP + H2O = UDP + phosphate + H(+). The catalysed reaction is UDP + H2O = UMP + phosphate + H(+). In terms of biological role, catalyzes the hydrolysis of both di- and triphosphate nucleotides (NDPs and NTPs) and hydrolyze NTPs to nucleotide monophosphates (NMPs) in two distinct successive phosphate-releasing steps, with NDPs as intermediates and participates in the regulation of extracellular levels of nucleotides. By hydrolyzing proinflammatory ATP and platelet-activating ADP to AMP, it blocks platelet aggregation and supports blood flow. This chain is Ectonucleoside triphosphate diphosphohydrolase 1, found in Rattus norvegicus (Rat).